The sequence spans 187 residues: NAC domain-containing protein 104 (187 aa).

The region spanning 3–155 is the NAC domain; it reads LPPGFRFFPT…KWVICRVYEQ (153 aa). Residues 94 to 161 mediate DNA binding; the sequence is VGIKKYLTFY…VYEQNCSEEE (68 aa). The segment at 118-142 is disordered; sequence LPDSSSSSSRSSKRSSRASSSSHKP.

In terms of tissue distribution, expressed in root xylem vessels. Expressed in stems, vascular tissue of cauline leaves and tracheary elements of sepals.

Its subcellular location is the nucleus. Functionally, probable transcription factor that influences tracheary elements and xylem development by negatively regulating secondary cell wall fiber synthesis and programmed cell death. The protein is NAC domain-containing protein 104 of Arabidopsis thaliana (Mouse-ear cress).